Reading from the N-terminus, the 388-residue chain is DNA replication and repair protein RecF (388 aa).

Residue 30 to 37 (GNNAQGKS) participates in ATP binding.

This sequence belongs to the RecF family.

It localises to the cytoplasm. The RecF protein is involved in DNA metabolism; it is required for DNA replication and normal SOS inducibility. RecF binds preferentially to single-stranded, linear DNA. It also seems to bind ATP. The polypeptide is DNA replication and repair protein RecF (Picosynechococcus sp. (strain ATCC 27264 / PCC 7002 / PR-6) (Agmenellum quadruplicatum)).